Reading from the N-terminus, the 365-residue chain is Eukaryotic translation initiation factor 3 subunit H (365 aa).

The MPN domain maps to 15–166 (ILLDSLVVMK…IRAWRLSTAA (152 aa)). A disordered region spans residues 276–295 (KRQQENESRLARGDPPLPMD). A compositionally biased stretch (basic and acidic residues) spans 277–287 (RQQENESRLAR).

It belongs to the eIF-3 subunit H family. Component of the eukaryotic translation initiation factor 3 (eIF-3) complex.

It localises to the cytoplasm. In terms of biological role, component of the eukaryotic translation initiation factor 3 (eIF-3) complex, which is involved in protein synthesis of a specialized repertoire of mRNAs and, together with other initiation factors, stimulates binding of mRNA and methionyl-tRNAi to the 40S ribosome. The eIF-3 complex specifically targets and initiates translation of a subset of mRNAs involved in cell proliferation. The protein is Eukaryotic translation initiation factor 3 subunit H of Caenorhabditis briggsae.